We begin with the raw amino-acid sequence, 176 residues long: Parathyroid hormone-related protein (176 aa).

A signal peptide spans 1–25; it reads MMFTKLFQQWSFAVFLLSYSVPSYG. A propeptide spanning residues 26–37 is cleaved from the precursor; that stretch reads RSVEGISRRLKR. Positions 58–69 are important for receptor binding; that stretch reads RIFLQNLIEGVN. The tract at residues 76 to 157 is disordered; that stretch reads TSEVSPNPKP…WLNSGMYGSN (82 aa). Polar residues-rich tracts occupy residues 77–91 and 106–116; these read SEVSPNPKPATNTKN and TQETNKSQTYK. A Nuclear localization signal motif is present at residues 109–130; that stretch reads TNKSQTYKEQPLKVSGKKKKAK. Over residues 123-133 the composition is skewed to basic residues; it reads SGKKKKAKPGK.

It belongs to the parathyroid hormone family.

The protein resides in the secreted. Its subcellular location is the cytoplasm. The protein localises to the nucleus. Its function is as follows. Neuroendocrine peptide which is a critical regulator of cellular and organ growth, development, migration, differentiation and survival and of epithelial calcium ion transport. Acts by binding to its receptor, PTH1R, activating G protein-coupled receptor signaling. Regulates endochondral bone development and epithelial-mesenchymal interactions during the formation of the mammary glands and teeth. Required for skeletal homeostasis. Functionally, potent inhibitor of osteoclastic bone resorption. The polypeptide is Parathyroid hormone-related protein (PTHLH) (Gallus gallus (Chicken)).